We begin with the raw amino-acid sequence, 305 residues long: Large ribosomal subunit protein uL10 (305 aa).

It belongs to the universal ribosomal protein uL10 family. In terms of assembly, P0 forms a pentameric complex by interaction with dimers of P1 and P2. Phosphorylated.

In terms of biological role, ribosomal protein P0 is the functional equivalent of E.coli protein L10. This chain is Large ribosomal subunit protein uL10 (rplp0), found in Dictyostelium discoideum (Social amoeba).